The primary structure comprises 378 residues: MTTQFSVAGVELELLRYPAQQESNLQAWDAADEHLLKSLIESEQAAVPTAIINDSFGALSCSVSKLNPSWPLCVETDARTSFLGTEQNHGRNQLPLDNLQWFTSRDTLPENLALVLMKLPKNLSYFAHQLTRLSQVLPAGTRILVAAKAKSINGALLDVFAKHLGPASASLAWKNTRVITCISDGKPRPLAKEVTWAVPEYQLEISNLSNVFAANKLDIGARIMLENLPKGDFKSIVDLGCGNGVLGLRTAQLFPEADIHFIDDSEMAVASAKANWARNQLPADKGHFYWDDCMTHLPEEVQPDLVLCNPPFHQGEAITDHIAWQMFLDARRRLKDGGILHIVGNRHLAYHVKLQRLFKNCTTVASNGKFVILQAQKK.

This sequence belongs to the methyltransferase superfamily. RlmG family.

The protein localises to the cytoplasm. It carries out the reaction guanosine(1835) in 23S rRNA + S-adenosyl-L-methionine = N(2)-methylguanosine(1835) in 23S rRNA + S-adenosyl-L-homocysteine + H(+). In terms of biological role, specifically methylates the guanine in position 1835 (m2G1835) of 23S rRNA. This is Ribosomal RNA large subunit methyltransferase G from Shewanella baltica (strain OS155 / ATCC BAA-1091).